The primary structure comprises 109 residues: Period circadian protein (109 aa).

Polar residues-rich tracts occupy residues 42–56 (QSYSTPANTGSNLSP) and 68–80 (SSRNCTSGSNLNM). A disordered region spans residues 42 to 109 (QSYSTPANTG…LVTLTESLLK (68 aa)). Positions 81 to 97 (GSVTNTSNTGTGTSSGS) are enriched in low complexity.

As to quaternary structure, forms a heterodimer with timeless (TIM); the complex then translocates into the nucleus. In terms of processing, phosphorylated with a circadian rhythmicity, probably by the double-time protein (dbt). Phosphorylation could be implicated in the stability of per monomer and in the formation of heterodimer per-tim.

It localises to the nucleus. It is found in the cytoplasm. Its subcellular location is the perinuclear region. In terms of biological role, essential for biological clock functions. Determines the period length of circadian and ultradian rhythms; an increase in PER dosage leads to shortened circadian rhythms and a decrease leads to lengthened circadian rhythms. Essential for the circadian rhythmicity of locomotor activity, eclosion behavior, and for the rhythmic component of the male courtship song that originates in the thoracic nervous system. The biological cycle depends on the rhythmic formation and nuclear localization of the TIM-PER complex. Light induces the degradation of TIM, which promotes elimination of PER. Nuclear activity of the heterodimer coordinatively regulates PER and TIM transcription through a negative feedback loop. Behaves as a negative element in circadian transcriptional loop. Does not appear to bind DNA, suggesting indirect transcriptional inhibition. The sequence is that of Period circadian protein (per) from Musca domestica (House fly).